The chain runs to 210 residues: C4-dicarboxylate TRAP transporter small permease protein DctQ (210 aa).

4 consecutive transmembrane segments (helical) span residues 13 to 33 (EGLI…YVVL), 77 to 97 (ALFA…AGHL), 113 to 133 (VLGV…CVAS), and 160 to 180 (IGLI…EILV).

Belongs to the TRAP transporter small permease family. The complex comprises the extracytoplasmic solute receptor protein DctP, and the two transmembrane proteins DctQ and DctM.

The protein localises to the cell inner membrane. Part of the tripartite ATP-independent periplasmic (TRAP) transport system DctPQM involved in C4-dicarboxylates uptake. The polypeptide is C4-dicarboxylate TRAP transporter small permease protein DctQ (Pseudomonas aeruginosa (strain ATCC 15692 / DSM 22644 / CIP 104116 / JCM 14847 / LMG 12228 / 1C / PRS 101 / PAO1)).